Consider the following 75-residue polypeptide: Sec-independent protein translocase protein TatA (75 aa).

Residues 1–21 (MGSFSIWHWLVVLAIVLLVFG) form a helical membrane-spanning segment. Residues 40–75 (KKGMRDEDKPNAQLGDESRSQDASRTAQDEHDRTPR) form a disordered region.

It belongs to the TatA/E family. As to quaternary structure, the Tat system comprises two distinct complexes: a TatABC complex, containing multiple copies of TatA, TatB and TatC subunits, and a separate TatA complex, containing only TatA subunits. Substrates initially bind to the TatABC complex, which probably triggers association of the separate TatA complex to form the active translocon.

The protein resides in the cell inner membrane. Functionally, part of the twin-arginine translocation (Tat) system that transports large folded proteins containing a characteristic twin-arginine motif in their signal peptide across membranes. TatA could form the protein-conducting channel of the Tat system. The polypeptide is Sec-independent protein translocase protein TatA (Stenotrophomonas maltophilia (strain R551-3)).